The primary structure comprises 375 residues: Cobalt-precorrin-5B C(1)-methyltransferase (375 aa).

The protein belongs to the CbiD family.

It catalyses the reaction Co-precorrin-5B + S-adenosyl-L-methionine = Co-precorrin-6A + S-adenosyl-L-homocysteine. It functions in the pathway cofactor biosynthesis; adenosylcobalamin biosynthesis; cob(II)yrinate a,c-diamide from sirohydrochlorin (anaerobic route): step 6/10. Functionally, catalyzes the methylation of C-1 in cobalt-precorrin-5B to form cobalt-precorrin-6A. The sequence is that of Cobalt-precorrin-5B C(1)-methyltransferase from Fusobacterium nucleatum subsp. nucleatum (strain ATCC 25586 / DSM 15643 / BCRC 10681 / CIP 101130 / JCM 8532 / KCTC 2640 / LMG 13131 / VPI 4355).